Here is a 106-residue protein sequence, read N- to C-terminus: Putative protein SH (106 aa).

Positions 48–106 are disordered; it reads HSQQNNSGHQFGDRFHSKGHQDTEGRILWKEASTRTTDSTETADTQLVQRQGNGGICLS. Residues 58–80 show a composition bias toward basic and acidic residues; sequence FGDRFHSKGHQDTEGRILWKEAS. Over residues 81–92 the composition is skewed to low complexity; sequence TRTTDSTETADT.

As to expression, heart.

Functionally, may be involved with the regulation of GNRH gene expression. It is not known if this protein is transcribed. The chain is Putative protein SH from Rattus norvegicus (Rat).